The chain runs to 190 residues: dCTP deaminase, dUMP-forming (190 aa).

Residues 101–106 (KSSLGR), Asp-119, 127–129 (TLE), Gln-148, Tyr-162, and Gln-174 each bind dCTP. The active-site Proton donor/acceptor is Glu-129. The interval 161-190 (PYGSSSVGSKYQGQRGPTPSRSYQNFVKND) is disordered. The segment covering 163–190 (GSSSVGSKYQGQRGPTPSRSYQNFVKND) has biased composition (polar residues).

This sequence belongs to the dCTP deaminase family. In terms of assembly, homotrimer.

The catalysed reaction is dCTP + 2 H2O = dUMP + NH4(+) + diphosphate. It participates in pyrimidine metabolism; dUMP biosynthesis; dUMP from dCTP: step 1/1. In terms of biological role, bifunctional enzyme that catalyzes both the deamination of dCTP to dUTP and the hydrolysis of dUTP to dUMP without releasing the toxic dUTP intermediate. The polypeptide is dCTP deaminase, dUMP-forming (Mycolicibacterium vanbaalenii (strain DSM 7251 / JCM 13017 / BCRC 16820 / KCTC 9966 / NRRL B-24157 / PYR-1) (Mycobacterium vanbaalenii)).